The following is a 1062-amino-acid chain: Inactive tyrosine-protein kinase 7 (1062 aa).

A signal peptide spans 1–22; the sequence is MGARPLTLLRALLLPLLAGAQA. 7 Ig-like C2-type domains span residues 23 to 112, 120 to 210, 217 to 309, 301 to 399, 404 to 489, 495 to 578, and 570 to 672; these read AIVF…ASFN, PVVL…FTLS, ARVV…EATL, PPIV…VNIT, PTWL…ARVQ, KFTP…HVQL, and GQIR…APLL. The Extracellular portion of the chain corresponds to 23-696; it reads AIVFIKEPSS…SPPPYKMIQT (674 aa). Cysteines 45 and 93 form a disulfide. N-linked (GlcNAc...) asparagine glycosylation is found at N98, N108, N176, N206, N260, and N275. The cysteines at positions 142 and 192 are disulfide-linked. 2 disulfide bridges follow: C238/C293 and C335/C383. 4 N-linked (GlcNAc...) asparagine glycosylation sites follow: N397, N455, N559, and N638. 3 disulfide bridges follow: C425-C473, C516-C562, and C605-C656. Residues 697 to 717 traverse the membrane as a helical segment; that stretch reads IGLSVGAAVAYIIAVLGLMFY. Residues 718 to 1062 lie on the Cytoplasmic side of the membrane; sequence CKKRCKAKRL…LGDSPADSKQ (345 aa). Disordered regions lie at residues 728 to 750 and 1039 to 1062; these read QKQP…QNGQ and NPKD…DSKQ. The interval 786 to 1062 is interaction with CTNNB1; it reads ASLQPITTLG…LGDSPADSKQ (277 aa). The Protein kinase; inactive domain occupies 788–1058; that stretch reads LQPITTLGKS…IASTLGDSPA (271 aa). S1056 bears the Phosphoserine mark.

Belongs to the protein kinase superfamily. Tyr protein kinase family. Insulin receptor subfamily. Interacts with CTNNB1. In terms of processing, MMP14 cleaves PTK7 between Pro-613 and Leu-614 generating an N-terminal soluble (70 kDa) fragment and a membrane C-terminal (50 kDa) fragment. Proteolysis by MMP14 regulates PTK7 function in non-canonical Wnt signaling pathway. As to expression, expressed at high levels in lung and un-pregnant uterus among adult tissues, and in the tail, limbs, somites, gut and craniofacial regions among embryonic tissues.

It localises to the membrane. The protein resides in the cell junction. Inactive tyrosine kinase involved in Wnt signaling pathway. Component of both the non-canonical (also known as the Wnt/planar cell polarity signaling) and the canonical Wnt signaling pathway. Functions in cell adhesion, cell migration, cell polarity, proliferation, actin cytoskeleton reorganization and apoptosis. Has a role in embryogenesis, epithelial tissue organization and angiogenesis. The polypeptide is Inactive tyrosine-protein kinase 7 (Ptk7) (Mus musculus (Mouse)).